Consider the following 430-residue polypeptide: Histidine--tRNA ligase (430 aa).

This sequence belongs to the class-II aminoacyl-tRNA synthetase family. In terms of assembly, homodimer.

It localises to the cytoplasm. It catalyses the reaction tRNA(His) + L-histidine + ATP = L-histidyl-tRNA(His) + AMP + diphosphate + H(+). The polypeptide is Histidine--tRNA ligase (Lactococcus lactis subsp. cremoris (strain MG1363)).